The sequence spans 198 residues: Peptide deformylase (198 aa).

The Fe cation site is built by C123 and H170. Residue E171 is part of the active site. H174 is a binding site for Fe cation.

The protein belongs to the polypeptide deformylase family. It depends on Fe(2+) as a cofactor.

The enzyme catalyses N-terminal N-formyl-L-methionyl-[peptide] + H2O = N-terminal L-methionyl-[peptide] + formate. Functionally, removes the formyl group from the N-terminal Met of newly synthesized proteins. Requires at least a dipeptide for an efficient rate of reaction. N-terminal L-methionine is a prerequisite for activity but the enzyme has broad specificity at other positions. This is Peptide deformylase from Mycoplasmopsis pulmonis (strain UAB CTIP) (Mycoplasma pulmonis).